The chain runs to 607 residues: ENTH domain-containing protein 1 (607 aa).

Positions 9–141 (NFVKNYSDAE…MDEPLLCKER (133 aa)) constitute an ENTH domain. A coiled-coil region spans residues 543–574 (EAKNSISVLLREVKRAIARLHEDLSTVIQELN).

This Homo sapiens (Human) protein is ENTH domain-containing protein 1 (ENTHD1).